The following is a 330-amino-acid chain: Cathepsin S (330 aa).

Positions 1 to 17 (MKQLVCVLFVCSSAVTQ) are cleaved as a signal peptide. The propeptide at 18-114 (LHKDPTLDHH…ITYKSNPNQM (97 aa)) is activation peptide. Asn-104 carries N-linked (GlcNAc...) asparagine glycosylation. Intrachain disulfides connect Cys-126-Cys-223, Cys-136-Cys-179, Cys-170-Cys-212, and Cys-271-Cys-319. Residue Cys-139 is part of the active site. Active-site residues include His-277 and Asn-297.

This sequence belongs to the peptidase C1 family.

The protein localises to the lysosome. Its subcellular location is the secreted. It is found in the cytoplasmic vesicle. The protein resides in the phagosome. The catalysed reaction is Similar to cathepsin L, but with much less activity on Z-Phe-Arg-|-NHMec, and more activity on the Z-Val-Val-Arg-|-Xaa compound.. Functionally, thiol protease. Key protease responsible for the removal of the invariant chain from MHC class II molecules and MHC class II antigen presentation. The bond-specificity of this proteinase is in part similar to the specificities of cathepsin L. This Saimiri boliviensis boliviensis (Bolivian squirrel monkey) protein is Cathepsin S (CTSS).